The primary structure comprises 104 residues: Nucleoid-associated protein OB0030 (104 aa).

The tract at residues 1-23 (MKGNMNNMMKQMQKMQKKMMQAQ) is disordered.

The protein belongs to the YbaB/EbfC family. Homodimer.

Its subcellular location is the cytoplasm. The protein localises to the nucleoid. Functionally, binds to DNA and alters its conformation. May be involved in regulation of gene expression, nucleoid organization and DNA protection. This Oceanobacillus iheyensis (strain DSM 14371 / CIP 107618 / JCM 11309 / KCTC 3954 / HTE831) protein is Nucleoid-associated protein OB0030.